A 561-amino-acid chain; its full sequence is Dihydroxy-acid dehydratase (561 aa).

Cys50 is a [2Fe-2S] cluster binding site. Asp82 serves as a coordination point for Mg(2+). Cys123 lines the [2Fe-2S] cluster pocket. Residues Asp124 and Lys125 each contribute to the Mg(2+) site. At Lys125 the chain carries N6-carboxylysine. [2Fe-2S] cluster is bound at residue Cys195. Glu447 contacts Mg(2+). Ser473 (proton acceptor) is an active-site residue.

Belongs to the IlvD/Edd family. As to quaternary structure, homodimer. Requires [2Fe-2S] cluster as cofactor. Mg(2+) is required as a cofactor.

It carries out the reaction (2R)-2,3-dihydroxy-3-methylbutanoate = 3-methyl-2-oxobutanoate + H2O. The catalysed reaction is (2R,3R)-2,3-dihydroxy-3-methylpentanoate = (S)-3-methyl-2-oxopentanoate + H2O. Its pathway is amino-acid biosynthesis; L-isoleucine biosynthesis; L-isoleucine from 2-oxobutanoate: step 3/4. It functions in the pathway amino-acid biosynthesis; L-valine biosynthesis; L-valine from pyruvate: step 3/4. Functionally, functions in the biosynthesis of branched-chain amino acids. Catalyzes the dehydration of (2R,3R)-2,3-dihydroxy-3-methylpentanoate (2,3-dihydroxy-3-methylvalerate) into 2-oxo-3-methylpentanoate (2-oxo-3-methylvalerate) and of (2R)-2,3-dihydroxy-3-methylbutanoate (2,3-dihydroxyisovalerate) into 2-oxo-3-methylbutanoate (2-oxoisovalerate), the penultimate precursor to L-isoleucine and L-valine, respectively. The polypeptide is Dihydroxy-acid dehydratase (Rippkaea orientalis (strain PCC 8801 / RF-1) (Cyanothece sp. (strain PCC 8801))).